The primary structure comprises 350 residues: Ferrochelatase (350 aa).

Positions 220 and 301 each coordinate Fe cation.

The protein belongs to the ferrochelatase family.

The protein localises to the cytoplasm. It carries out the reaction heme b + 2 H(+) = protoporphyrin IX + Fe(2+). It functions in the pathway porphyrin-containing compound metabolism; protoheme biosynthesis; protoheme from protoporphyrin-IX: step 1/1. Functionally, catalyzes the ferrous insertion into protoporphyrin IX. This is Ferrochelatase from Brucella anthropi (strain ATCC 49188 / DSM 6882 / CCUG 24695 / JCM 21032 / LMG 3331 / NBRC 15819 / NCTC 12168 / Alc 37) (Ochrobactrum anthropi).